The chain runs to 89 residues: Small ribosomal subunit protein uS17 (89 aa).

The protein belongs to the universal ribosomal protein uS17 family. As to quaternary structure, part of the 30S ribosomal subunit.

In terms of biological role, one of the primary rRNA binding proteins, it binds specifically to the 5'-end of 16S ribosomal RNA. In Polynucleobacter asymbioticus (strain DSM 18221 / CIP 109841 / QLW-P1DMWA-1) (Polynucleobacter necessarius subsp. asymbioticus), this protein is Small ribosomal subunit protein uS17.